The sequence spans 316 residues: MNLDYLDFEQPIAELQAKIDELRRVGTSQEINLTEEVNKLEEKNAQLTRQIFSNLTAQQIVQLARHPLRPYTLDYIQRIFTDFNELHGDRHYSQASAIIGGLARLNGEPVMVIGHQKGRTTQEKIYRNFGMARPEGFRKALRLMKLAERFSIPVITLIDTPGAYPGIGAEERNQSEAIARNLFEMAQLKIPIICTIIGEGCSGGALAIGVGDRTLMLQYAYYSVISPEGCASILWKSAEKAGEAAEALGLTANRLYELGLIDEIIKEPLGGAHRDTDAMAEKLKKHLQANLTNLQAKSANDLLEERYRRWLSYGKD.

The 255-residue stretch at 39–293 (KLEEKNAQLT…KKHLQANLTN (255 aa)) folds into the CoA carboxyltransferase C-terminal domain.

It belongs to the AccA family. As to quaternary structure, acetyl-CoA carboxylase is a heterohexamer composed of biotin carboxyl carrier protein (AccB), biotin carboxylase (AccC) and two subunits each of ACCase subunit alpha (AccA) and ACCase subunit beta (AccD).

It localises to the cytoplasm. It catalyses the reaction N(6)-carboxybiotinyl-L-lysyl-[protein] + acetyl-CoA = N(6)-biotinyl-L-lysyl-[protein] + malonyl-CoA. Its pathway is lipid metabolism; malonyl-CoA biosynthesis; malonyl-CoA from acetyl-CoA: step 1/1. Component of the acetyl coenzyme A carboxylase (ACC) complex. First, biotin carboxylase catalyzes the carboxylation of biotin on its carrier protein (BCCP) and then the CO(2) group is transferred by the carboxyltransferase to acetyl-CoA to form malonyl-CoA. In Coxiella burnetii (strain RSA 331 / Henzerling II), this protein is Acetyl-coenzyme A carboxylase carboxyl transferase subunit alpha.